The chain runs to 211 residues: Holliday junction resolvase RecU (211 aa).

Residues threonine 95, aspartate 97, glutamate 110, and glutamine 129 each coordinate Mg(2+).

The protein belongs to the RecU family. Mg(2+) is required as a cofactor.

The protein resides in the cytoplasm. It catalyses the reaction Endonucleolytic cleavage at a junction such as a reciprocal single-stranded crossover between two homologous DNA duplexes (Holliday junction).. Endonuclease that resolves Holliday junction intermediates in genetic recombination. Cleaves mobile four-strand junctions by introducing symmetrical nicks in paired strands. Promotes annealing of linear ssDNA with homologous dsDNA. Required for DNA repair, homologous recombination and chromosome segregation. This chain is Holliday junction resolvase RecU, found in Lactobacillus acidophilus (strain ATCC 700396 / NCK56 / N2 / NCFM).